Reading from the N-terminus, the 544-residue chain is uncharacterized protein (544 aa).

14 helical membrane-spanning segments follow: residues 31–51, 52–72, 84–104, 116–136, 162–182, 191–211, 230–250, 257–277, 318–338, 356–376, 383–403, 407–427, 450–470, and 501–521; these read ILVF…AALA, GSVL…IGLL, LPWM…QWLI, WGLF…YTTV, FAFS…IAAG, FGEL…WSAL, LAPL…AKSF, GFDY…GFGF, FLFV…TASI, TIAL…QALA, VIYF…WLVQ, VALL…AYLI, FFYA…LFLV, and FAVA…AIFY.

This sequence belongs to the sodium:galactoside symporter (TC 2.A.2) family.

It localises to the cell membrane. This is an uncharacterized protein from Synechocystis sp. (strain ATCC 27184 / PCC 6803 / Kazusa).